Here is a 171-residue protein sequence, read N- to C-terminus: Shikimate kinase (171 aa).

14 to 19 (GAGKST) is an ATP binding site. A Mg(2+)-binding site is contributed by Ser18. Asp36, Arg60, and Gly82 together coordinate substrate. Residue Arg120 participates in ATP binding. Arg139 is a binding site for substrate. Gln156 lines the ATP pocket.

The protein belongs to the shikimate kinase family. In terms of assembly, monomer. The cofactor is Mg(2+).

It localises to the cytoplasm. The catalysed reaction is shikimate + ATP = 3-phosphoshikimate + ADP + H(+). It participates in metabolic intermediate biosynthesis; chorismate biosynthesis; chorismate from D-erythrose 4-phosphate and phosphoenolpyruvate: step 5/7. Functionally, catalyzes the specific phosphorylation of the 3-hydroxyl group of shikimic acid using ATP as a cosubstrate. In Psychromonas ingrahamii (strain DSM 17664 / CCUG 51855 / 37), this protein is Shikimate kinase.